Reading from the N-terminus, the 937-residue chain is Lysosomal alpha-glucosidase (937 aa).

Residues 1-23 (MMRWPPCSRPLLGVCTLLSLALL) form the signal peptide. Residues 24-60 (GHILLHDLEVVPRELRGFSQDEIHQACQPGASSPECR) constitute a propeptide that is removed on maturation. One can recognise a P-type domain in the interval 68–118 (TQCDLPPNSRFDCAPDKGITPQQCEARGCCYMPAEWPPDAQMGQPWCFFPP). Cystine bridges form between C70-C97, C80-C96, and C91-C114. 4 N-linked (GlcNAc...) asparagine glycosylation sites follow: N127, N220, N259, and N377. D391 contacts substrate. N457 is a glycosylation site (N-linked (GlcNAc...) asparagine). D505 (nucleophile) is an active-site residue. E508 is an active-site residue. An intrachain disulfide couples C520 to C545. Substrate contacts are provided by R587 and D603. Residues C634 and C645 are joined by a disulfide bond. N639 carries N-linked (GlcNAc...) asparagine glycosylation. Substrate is bound at residue H661. N867, N888, and N910 each carry an N-linked (GlcNAc...) asparagine glycan.

The protein belongs to the glycosyl hydrolase 31 family.

Its subcellular location is the lysosome. The protein resides in the lysosome membrane. It catalyses the reaction Hydrolysis of terminal, non-reducing (1-&gt;4)-linked alpha-D-glucose residues with release of alpha-D-glucose.. Essential for the degradation of glycogen in lysosomes. Has highest activity on alpha-1,4-linked glycosidic linkages, but can also hydrolyze alpha-1,6-linked glucans. The chain is Lysosomal alpha-glucosidase (GAA) from Bos taurus (Bovine).